The following is a 266-amino-acid chain: Stomatin homolog PH1511 (266 aa).

A helical transmembrane segment spans residues 7 to 27; the sequence is FFVTSIILLFILIFLASAIKI. Coiled coils occupy residues 125–152 and 178–213; these read GQAHLDELLSERDKLNMQLQRIIDEATD and RQAEAERERRARITLAEAERQAAEKLREAAEIISEH.

The protein belongs to the band 7/mec-2 family. In terms of assembly, homotrimer. Interacts with PH1510 and is cleaved by PH1510.

The protein resides in the membrane. The polypeptide is Stomatin homolog PH1511 (Pyrococcus horikoshii (strain ATCC 700860 / DSM 12428 / JCM 9974 / NBRC 100139 / OT-3)).